The primary structure comprises 162 residues: Putative 4-hydroxy-4-methyl-2-oxoglutarate aldolase (162 aa).

Residues 75–78 and Arg-97 each bind substrate; that span reads GDML. Asp-98 is an a divalent metal cation binding site.

Belongs to the class II aldolase/RraA-like family. In terms of assembly, homotrimer. A divalent metal cation is required as a cofactor.

It carries out the reaction 4-hydroxy-4-methyl-2-oxoglutarate = 2 pyruvate. The enzyme catalyses oxaloacetate + H(+) = pyruvate + CO2. Functionally, catalyzes the aldol cleavage of 4-hydroxy-4-methyl-2-oxoglutarate (HMG) into 2 molecules of pyruvate. Also contains a secondary oxaloacetate (OAA) decarboxylase activity due to the common pyruvate enolate transition state formed following C-C bond cleavage in the retro-aldol and decarboxylation reactions. The protein is Putative 4-hydroxy-4-methyl-2-oxoglutarate aldolase of Pseudomonas paraeruginosa (strain DSM 24068 / PA7) (Pseudomonas aeruginosa (strain PA7)).